Here is a 304-residue protein sequence, read N- to C-terminus: tRNA pseudouridine synthase B (304 aa).

Asp-48 serves as the catalytic Nucleophile.

Belongs to the pseudouridine synthase TruB family. Type 1 subfamily.

The catalysed reaction is uridine(55) in tRNA = pseudouridine(55) in tRNA. Functionally, responsible for synthesis of pseudouridine from uracil-55 in the psi GC loop of transfer RNAs. The sequence is that of tRNA pseudouridine synthase B from Pseudomonas paraeruginosa (strain DSM 24068 / PA7) (Pseudomonas aeruginosa (strain PA7)).